The chain runs to 378 residues: Acetylornithine deacetylase (378 aa).

His76 lines the Zn(2+) pocket. Asp78 is an active-site residue. Position 108 (Asp108) interacts with Zn(2+). Glu140 is a catalytic residue. Glu141, Glu165, and His351 together coordinate Zn(2+).

Belongs to the peptidase M20A family. ArgE subfamily. Homodimer. Zn(2+) is required as a cofactor. The cofactor is Co(2+). Requires glutathione as cofactor.

It localises to the cytoplasm. The enzyme catalyses N(2)-acetyl-L-ornithine + H2O = L-ornithine + acetate. It participates in amino-acid biosynthesis; L-arginine biosynthesis; L-ornithine from N(2)-acetyl-L-ornithine (linear): step 1/1. In terms of biological role, catalyzes the hydrolysis of the amide bond of N(2)-acetylated L-amino acids. Cleaves the acetyl group from N-acetyl-L-ornithine to form L-ornithine, an intermediate in L-arginine biosynthesis pathway, and a branchpoint in the synthesis of polyamines. The polypeptide is Acetylornithine deacetylase (Vibrio vulnificus (strain CMCP6)).